A 132-amino-acid chain; its full sequence is Small ribosomal subunit protein eS12 (132 aa).

Belongs to the eukaryotic ribosomal protein eS12 family.

This chain is Small ribosomal subunit protein eS12 (rps12), found in Oreochromis niloticus (Nile tilapia).